The primary structure comprises 489 residues: Transmembrane protein 161A (489 aa).

The first 23 residues, 1–23, serve as a signal peptide directing secretion; sequence MAVMGIQMVVTLLVASLMQRVSP. Residues 24–98 lie on the Extracellular side of the membrane; that stretch reads HYSFGRWLLC…INTMDALVLR (75 aa). An N-linked (GlcNAc...) asparagine glycan is attached at N34. A helical membrane pass occupies residues 99–119; that stretch reads YFLEYQWFIDFALYSTIIYLF. At 120-134 the chain is on the cytoplasmic side; sequence TEAYYCVVDAQNEIN. The chain crosses the membrane as a helical span at residues 135–155; it reads IGVLWCLMSIIFSIKVLFTVM. Over 156-166 the chain is Extracellular; that stretch reads KHYFRSEEGGE. Residues 167-187 traverse the membrane as a helical segment; that stretch reads RSVCMTFAFFFLLIAMIVTIV. Over 188-224 the chain is Cytoplasmic; it reads RDEYLEFGLEPGLASVCHNLENFLAQQGWQWSMPFVK. A helical membrane pass occupies residues 225-245; it reads LAFKIALVALCAFLGGCLTFP. Residues 246–264 are Extracellular-facing; sequence GLRLAQTHLDALKMAADRP. Residues 265 to 285 form a helical membrane-spanning segment; the sequence is MLQLLLHMSFLPPVIVVVLWI. Over 286-304 the chain is Cytoplasmic; the sequence is RPITRDFLLNAPMGKESVE. Residues 305–325 form a helical membrane-spanning segment; the sequence is LMSNSAYNTFRLWIIVLLCLL. Residues 326-370 lie on the Extracellular side of the membrane; it reads RFCLTRFHLQAYLCLADRWVEQMKREAGRISMLEIQRKISRIFCY. Residues 371 to 391 traverse the membrane as a helical segment; sequence LTVVALQYLAPVILTFHCVFM. The Cytoplasmic portion of the chain corresponds to 392–459; it reads LKSLGDYSWG…GLFTPLFFRG (68 aa). A disordered region spans residues 413 to 432; the sequence is VDSSPVQSHSPTSEEEEDTE. Residues 460 to 480 form a helical membrane-spanning segment; it reads IFSFLTWWVSVCQIITSLFGL. The Extracellular portion of the chain corresponds to 481–489; the sequence is YFHQYLGAS.

The protein belongs to the TMEM161 family.

The protein resides in the membrane. May play a role in protection against oxidative stress. In Xenopus laevis (African clawed frog), this protein is Transmembrane protein 161A (tmem161a).